Here is a 26-residue protein sequence, read N- to C-terminus: Peroxidase 1 (26 aa).

Asp-15 contacts Ca(2+).

Belongs to the peroxidase family. Classical plant (class III) peroxidase subfamily. It depends on heme b as a cofactor. Ca(2+) is required as a cofactor.

The protein localises to the secreted. The enzyme catalyses 2 a phenolic donor + H2O2 = 2 a phenolic radical donor + 2 H2O. Removal of H(2)O(2), oxidation of toxic reductants, biosynthesis and degradation of lignin, suberization, auxin catabolism, response to environmental stresses such as wounding, pathogen attack and oxidative stress. These functions might be dependent on each isozyme/isoform in each plant tissue. This is Peroxidase 1 from Vitis vinifera (Grape).